A 258-amino-acid polypeptide reads, in one-letter code: ATP synthase subunit a (258 aa).

A run of 5 helical transmembrane segments spans residues 38 to 58 (KPVW…YVGA), 94 to 114 (WFPY…IGLF), 118 to 138 (YPVT…FVLT), 193 to 213 (ILAG…FGLP), and 215 to 235 (AFVS…VAVI).

It belongs to the ATPase A chain family. In terms of assembly, F-type ATPases have 2 components, CF(1) - the catalytic core - and CF(0) - the membrane proton channel. CF(1) has five subunits: alpha(3), beta(3), gamma(1), delta(1), epsilon(1). CF(0) has three main subunits: a(1), b(2) and c(9-12). The alpha and beta chains form an alternating ring which encloses part of the gamma chain. CF(1) is attached to CF(0) by a central stalk formed by the gamma and epsilon chains, while a peripheral stalk is formed by the delta and b chains.

Its subcellular location is the cell membrane. Functionally, key component of the proton channel; it plays a direct role in the translocation of protons across the membrane. In Rubrobacter xylanophilus (strain DSM 9941 / JCM 11954 / NBRC 16129 / PRD-1), this protein is ATP synthase subunit a.